A 309-amino-acid polypeptide reads, in one-letter code: Uricase (309 aa).

An N-acetylalanine modification is found at alanine 2. Catalysis depends on charge relay system residues lysine 16 and threonine 63. Urate-binding residues include threonine 63, aspartate 64, phenylalanine 165, arginine 182, valine 237, glutamine 238, and asparagine 264. The active-site Charge relay system is the histidine 266. Positions 307–309 match the Microbody targeting signal motif; sequence SKL.

The protein belongs to the uricase family.

Its subcellular location is the peroxisome. It carries out the reaction urate + O2 + H2O = 5-hydroxyisourate + H2O2. Its pathway is purine metabolism; urate degradation; (S)-allantoin from urate: step 1/3. Catalyzes the oxidation of uric acid to 5-hydroxyisourate, which is further processed to form (S)-allantoin. This Arabidopsis thaliana (Mouse-ear cress) protein is Uricase.